A 354-amino-acid polypeptide reads, in one-letter code: Guanine nucleotide-binding protein G(t) subunit alpha-3 (354 aa).

A disordered region spans residues M1–A27. G2 carries N-myristoyl glycine lipidation. Residues E8–A27 are compositionally biased toward basic and acidic residues. A G-alpha domain is found at R32 to F354. The interval K35 to T48 is G1 motif. GTP-binding positions include G40–S47, L175–T181, D200–Q204, N269–D272, and A326. Residues S47 and T181 each contribute to the Mg(2+) site. The tract at residues D173–T181 is G2 motif. Residues F196–R205 are G3 motif. The interval V265 to D272 is G4 motif. The G5 motif stretch occupies residues T324–T329.

This sequence belongs to the G-alpha family. G(i/o/t/z) subfamily. As to quaternary structure, g proteins are composed of 3 units; alpha, beta and gamma, respectively GNAT3, GNB1 and GNG13 for Gustducin heterotrimer for bitter taste transduction. The alpha chain contains the guanine nucleotide binding site. Component of the TAS2R14-GNAT3 complex, consisting of TAS2R14, GNAT3, GNB1 and GNG2; within the complex interacts with TAS2R14; this complex plays a role in the perception of bitterness. Gustducin heterotrimer may also be composed of GNAT3, GNB3 and GNG13. Post-translationally, potential N-myristoylation may anchor alpha-subunit to the inner surface of plasma membrane. Expressed in taste buds (sensory organs of clustered epithelial cells) of the circumvallate, foliate and fungiform papillae of the tongue, as well as in nasoincisor, palatal and epiglottal taste buds at protein level. Expressed in enteroendocrine of the gut, in the lumenal pole of a subset of brush cells lining the stomach and the intestine at protein level. Detected in solitary cells throughout the respiratory track. Expressed also in spermatozoa.

The protein localises to the cytoplasm. In terms of biological role, guanine nucleotide-binding protein (G protein) alpha subunit playing a prominent role in bitter and sweet taste transduction as well as in umami (monosodium glutamate, monopotassium glutamate, and inosine monophosphate) taste transduction. Transduction by this alpha subunit involves coupling of specific cell-surface receptors with a cGMP-phosphodiesterase; Activation of phosphodiesterase lowers intracellular levels of cAMP and cGMP which may open a cyclic nucleotide-suppressible cation channel leading to influx of calcium, ultimately leading to release of neurotransmitter. Indeed, denatonium and strychnine induce transient reduction in cAMP and cGMP in taste tissue, whereas this decrease is inhibited by GNAT3 antibody. Gustducin heterotrimer transduces response to bitter and sweet compounds via regulation of phosphodiesterase for alpha subunit, as well as via activation of phospholipase C for beta and gamma subunits, with ultimate increase inositol trisphosphate and increase of intracellular Calcium. GNAT3 can functionally couple to taste receptors to transmit intracellular signal: receptor heterodimer TAS1R2/TAS1R3 senses sweetness and TAS1R1/TAS1R3 transduces umami taste, whereas the T2R family GPCRs act as bitter sensors. Also functions as lumenal sugar sensors in the gut to control the expression of the Na+-glucose transporter SGLT1 in response to dietaty sugar, as well as the secretion of Glucagon-like peptide-1, GLP-1 and glucose-dependent insulinotropic polypeptide, GIP. Thus, may modulate the gut capacity to absorb sugars, with implications for the prevention and treatment of malabsorption syndromes and diet-related disorders including diabetes and obesity. In Rattus norvegicus (Rat), this protein is Guanine nucleotide-binding protein G(t) subunit alpha-3 (Gnat3).